The primary structure comprises 709 residues: Phosphoribosylformylglycinamidine synthase subunit PurL (709 aa).

Residue H36 is part of the active site. The ATP site is built by Y39 and K80. A Mg(2+)-binding site is contributed by E82. Substrate-binding positions include 83-86 (SHNH) and R105. H84 acts as the Proton acceptor in catalysis. Residue D106 participates in Mg(2+) binding. Residue Q226 participates in substrate binding. Residue D252 coordinates Mg(2+). 294–296 (ETQ) contacts substrate. Residues D470 and G507 each coordinate ATP. S510 serves as a coordination point for substrate.

This sequence belongs to the FGAMS family. In terms of assembly, monomer. Part of the FGAM synthase complex composed of 1 PurL, 1 PurQ and 2 PurS subunits.

The protein localises to the cytoplasm. The catalysed reaction is N(2)-formyl-N(1)-(5-phospho-beta-D-ribosyl)glycinamide + L-glutamine + ATP + H2O = 2-formamido-N(1)-(5-O-phospho-beta-D-ribosyl)acetamidine + L-glutamate + ADP + phosphate + H(+). The protein operates within purine metabolism; IMP biosynthesis via de novo pathway; 5-amino-1-(5-phospho-D-ribosyl)imidazole from N(2)-formyl-N(1)-(5-phospho-D-ribosyl)glycinamide: step 1/2. Functionally, part of the phosphoribosylformylglycinamidine synthase complex involved in the purines biosynthetic pathway. Catalyzes the ATP-dependent conversion of formylglycinamide ribonucleotide (FGAR) and glutamine to yield formylglycinamidine ribonucleotide (FGAM) and glutamate. The FGAM synthase complex is composed of three subunits. PurQ produces an ammonia molecule by converting glutamine to glutamate. PurL transfers the ammonia molecule to FGAR to form FGAM in an ATP-dependent manner. PurS interacts with PurQ and PurL and is thought to assist in the transfer of the ammonia molecule from PurQ to PurL. This Saccharolobus solfataricus (strain ATCC 35092 / DSM 1617 / JCM 11322 / P2) (Sulfolobus solfataricus) protein is Phosphoribosylformylglycinamidine synthase subunit PurL.